The primary structure comprises 146 residues: Leghemoglobin Lb120-1 (146 aa).

One can recognise a Globin domain in the interval Gly2–Asn146. Tyr24 and Tyr29 each carry nitrated tyrosine. Ser44 provides a ligand contact to heme b. Residue Ser44 is modified to Phosphoserine. Position 61 (His61) interacts with O2. The heme b site is built by Lys64, His93, and Lys96. Nitrated tyrosine is present on Tyr134.

The protein belongs to the plant globin family. In terms of assembly, monomer. Post-translationally, nitrated in effective nodules and particularly in hypoxic conditions; this mechanism may play a protective role in the symbiosis by buffering toxic peroxynitrite NO(2)(-). Nitration level decrease during nodule senescence. Phosphorylation at Ser-44 disrupts the molecular environment of its porphyrin ring oxygen binding pocket, thus leading to a reduced oxygen consumption and to the delivery of oxygen O(2) to symbiosomes. Root nodules.

The protein resides in the cytoplasm. Its subcellular location is the cytosol. The protein localises to the nucleus. In terms of biological role, leghemoglobin that reversibly binds oxygen O(2) through a pentacoordinated heme iron. In root nodules, facilitates the diffusion of oxygen to the bacteroids while preventing the bacterial nitrogenase from being inactivated by buffering dioxygen, nitric oxide and carbon monoxide, and promoting the formation of reactive oxygen species (ROS, e.g. H(2)O(2)). This role is essential for symbiotic nitrogen fixation (SNF). This chain is Leghemoglobin Lb120-1, found in Pisum sativum (Garden pea).